A 290-amino-acid polypeptide reads, in one-letter code: tRNA dimethylallyltransferase (290 aa).

ATP is bound at residue 11–18 (GPTASGKS). A substrate-binding site is contributed by 13-18 (TASGKS). Interaction with substrate tRNA regions lie at residues 36 to 39 (DSMQ) and 158 to 162 (QRIVR).

The protein belongs to the IPP transferase family. Monomer. The cofactor is Mg(2+).

It catalyses the reaction adenosine(37) in tRNA + dimethylallyl diphosphate = N(6)-dimethylallyladenosine(37) in tRNA + diphosphate. Catalyzes the transfer of a dimethylallyl group onto the adenine at position 37 in tRNAs that read codons beginning with uridine, leading to the formation of N6-(dimethylallyl)adenosine (i(6)A). The protein is tRNA dimethylallyltransferase of Bartonella henselae (strain ATCC 49882 / DSM 28221 / CCUG 30454 / Houston 1) (Rochalimaea henselae).